The sequence spans 121 residues: Flagellar protein FliT (121 aa).

Residues 1 to 50 (MNHAPHLYFAWQQLVEKSQLMLRLATEEQWDELIASEMAYVNAVQEIAHL) form a required for homodimerization region. The interval 60–98 (MQEQLRPMLRLILDNESKVKQLLQIRMDELAKLVGQSSV) is fliD binding.

The protein belongs to the FliT family. Homodimer. Interacts with FliD and FlhC.

The protein localises to the cytoplasm. It is found in the cytosol. Functionally, dual-function protein that regulates the transcription of class 2 flagellar operons and that also acts as an export chaperone for the filament-capping protein FliD. As a transcriptional regulator, acts as an anti-FlhDC factor; it directly binds FlhC, thus inhibiting the binding of the FlhC/FlhD complex to class 2 promoters, resulting in decreased expression of class 2 flagellar operons. As a chaperone, effects FliD transition to the membrane by preventing its premature polymerization, and by directing it to the export apparatus. The sequence is that of Flagellar protein FliT from Escherichia coli O157:H7.